We begin with the raw amino-acid sequence, 424 residues long: Serine hydroxymethyltransferase 1 (424 aa).

Residues L125 and 129 to 131 (GHL) contribute to the (6S)-5,6,7,8-tetrahydrofolate site. At K234 the chain carries N6-(pyridoxal phosphate)lysine.

It belongs to the SHMT family. Homodimer. Requires pyridoxal 5'-phosphate as cofactor.

It is found in the cytoplasm. The enzyme catalyses (6R)-5,10-methylene-5,6,7,8-tetrahydrofolate + glycine + H2O = (6S)-5,6,7,8-tetrahydrofolate + L-serine. The protein operates within one-carbon metabolism; tetrahydrofolate interconversion. It functions in the pathway amino-acid biosynthesis; glycine biosynthesis; glycine from L-serine: step 1/1. Its function is as follows. Catalyzes the reversible interconversion of serine and glycine with tetrahydrofolate (THF) serving as the one-carbon carrier. This reaction serves as the major source of one-carbon groups required for the biosynthesis of purines, thymidylate, methionine, and other important biomolecules. Also exhibits THF-independent aldolase activity toward beta-hydroxyamino acids, producing glycine and aldehydes, via a retro-aldol mechanism. In Burkholderia lata (strain ATCC 17760 / DSM 23089 / LMG 22485 / NCIMB 9086 / R18194 / 383), this protein is Serine hydroxymethyltransferase 1.